A 76-amino-acid polypeptide reads, in one-letter code: MSLCISDYLYLTLTFSKYERQKDKRPYSERKNQYTGPQFLYPPERIPPQKVIKWNEEGLPIYEIPGEGGHAEPAAA.

The propeptide at 1 to 14 (MSLCISDYLYLTLT) is removed in mature form.

In terms of biological role, displays antimicrobial activity against the Gram-positive bacteria B.subtilis ATCC 62037, S.aureus ATCC 15752 and S.mutans ATCC 25175, the Gram-negative bacteria E.coli ATCC 27325, P.putida ATCC 17426 and Serratia sp. ATCC 21074, and the fungi C.albicans ATCC 10231, C.neoformans ATCC 34881 and S.cerevisiae ATCC 44774. Does not possess hemolytic activity. This Lumbricus rubellus (Humus earthworm) protein is Antimicrobial peptide lumbricin-1.